Consider the following 219-residue polypeptide: Probable GTP-binding protein EngB (219 aa).

The region spanning 24-207 (VQPEIAFAGR…HALIESWVRP (184 aa)) is the EngB-type G domain. GTP contacts are provided by residues 32–39 (GRSNAGKS), 59–63 (GRTQH), 81–84 (DLPG), 148–151 (TKCD), and 186–188 (FSA). Positions 39 and 61 each coordinate Mg(2+).

The protein belongs to the TRAFAC class TrmE-Era-EngA-EngB-Septin-like GTPase superfamily. EngB GTPase family. The cofactor is Mg(2+).

Functionally, necessary for normal cell division and for the maintenance of normal septation. The chain is Probable GTP-binding protein EngB from Burkholderia multivorans (strain ATCC 17616 / 249).